A 448-amino-acid polypeptide reads, in one-letter code: Homogentisate 1,2-dioxygenase (448 aa).

Histidine 303 functions as the Proton acceptor in the catalytic mechanism. Fe cation contacts are provided by histidine 346 and glutamate 352. 2 residues coordinate homogentisate: tyrosine 361 and histidine 382. Histidine 382 serves as a coordination point for Fe cation.

The protein belongs to the homogentisate dioxygenase family. As to quaternary structure, hexamer; dimer of trimers. The cofactor is Fe cation.

The catalysed reaction is homogentisate + O2 = 4-maleylacetoacetate + H(+). The protein operates within amino-acid degradation; L-phenylalanine degradation; acetoacetate and fumarate from L-phenylalanine: step 4/6. Functionally, involved in the catabolism of homogentisate (2,5-dihydroxyphenylacetate or 2,5-OH-PhAc), a central intermediate in the degradation of phenylalanine and tyrosine. Catalyzes the oxidative ring cleavage of the aromatic ring of homogentisate to yield maleylacetoacetate. In Rhodopseudomonas palustris (strain HaA2), this protein is Homogentisate 1,2-dioxygenase.